A 325-amino-acid chain; its full sequence is Glutarate 2-hydroxylase (325 aa).

The Fe cation site is built by histidine 160, aspartate 162, and histidine 292.

Belongs to the glutarate hydroxylase family. Homotetramer. Fe(2+) serves as cofactor.

The enzyme catalyses glutarate + 2-oxoglutarate + O2 = (S)-2-hydroxyglutarate + succinate + CO2. It participates in amino-acid degradation. Acts as an alpha-ketoglutarate-dependent dioxygenase catalyzing hydroxylation of glutarate (GA) to L-2-hydroxyglutarate (L2HG). Functions in a L-lysine degradation pathway that proceeds via cadaverine, glutarate and L-2-hydroxyglutarate. This chain is Glutarate 2-hydroxylase, found in Escherichia coli (strain 55989 / EAEC).